Reading from the N-terminus, the 159-residue chain is uncharacterized protein (159 aa).

Over residues 1–13 the composition is skewed to polar residues; it reads MTQPTRPSVTCDQ. Positions 1–57 are disordered; the sequence is MTQPTRPSVTCDQGSSTIGGTAAQATTSSSATSGSNYQRDRLGRRPEIGVGGQPQIC. Over residues 14 to 35 the composition is skewed to low complexity; it reads GSSTIGGTAAQATTSSSATSGS. Positions 38 to 47 are enriched in basic and acidic residues; that stretch reads QRDRLGRRPE.

This is an uncharacterized protein from Homo sapiens (Human).